The primary structure comprises 98 residues: NADH-ubiquinone oxidoreductase chain 4L (98 aa).

A run of 3 helical transmembrane segments spans residues 1 to 21 (MPVV…GLLV), 29 to 49 (SLLC…VTVL), and 61 to 81 (IILL…LVMV).

It belongs to the complex I subunit 4L family. Core subunit of respiratory chain NADH dehydrogenase (Complex I) which is composed of 45 different subunits.

Its subcellular location is the mitochondrion inner membrane. The enzyme catalyses a ubiquinone + NADH + 5 H(+)(in) = a ubiquinol + NAD(+) + 4 H(+)(out). Its function is as follows. Core subunit of the mitochondrial membrane respiratory chain NADH dehydrogenase (Complex I) which catalyzes electron transfer from NADH through the respiratory chain, using ubiquinone as an electron acceptor. Part of the enzyme membrane arm which is embedded in the lipid bilayer and involved in proton translocation. The sequence is that of NADH-ubiquinone oxidoreductase chain 4L (MT-ND4L) from Ursus arctos (Brown bear).